The primary structure comprises 489 residues: MAHSTAGDRDPEVGSEQHSSIAQLHTESMSDPWGDSNSPENPLNWPAPKKNFHVAIVSIFTLTANLAATMFAPGAPQLAKEFNITNSTVEAMTVSLYVLGFAFGPLLLAPLSELYGRLIIYNACNAVYIAFTVGCAFSTNVSMFLVFRFLCGCAASGPMSIGGGTVADITPQEERGKAMALFAMGPLLGPVLGPIIGGYVSQYTNWRWTFRIILIMSGIIGLATMFFMRETNAAVLLRRKAKRSPKDAEGMELELDKTKKETPSQVLVRAITRPFKMLLFSPIVLLISLYTGVLFGLIFLLFTTFPTVFQGVYGFDEGTSGLAYLGLGIGMFLGLVVFSILSDKLLGQKQGGTVSKPEQRLILMKWFGPITPLGCFMYGWSAYHHVHWIVPILGTSIIGFGSLFVVIPGQIYLVDSFGAEAAASALAANLLVRSPFGAFLGLVAAPLYDRLSLGWGNSVLGFITLAFTPVPWLFYRYGETLRTRFVVKL.

Positions 1–12 (MAHSTAGDRDPE) are enriched in basic and acidic residues. A disordered region spans residues 1-42 (MAHSTAGDRDPEVGSEQHSSIAQLHTESMSDPWGDSNSPENP). The segment covering 16–41 (EQHSSIAQLHTESMSDPWGDSNSPEN) has biased composition (polar residues). A helical membrane pass occupies residues 52–72 (FHVAIVSIFTLTANLAATMFA). N-linked (GlcNAc...) asparagine glycans are attached at residues Asn83 and Asn86. 11 consecutive transmembrane segments (helical) span residues 91–111 (AMTV…LAPL), 127–147 (VYIA…FLVF), 149–169 (FLCG…VADI), 180–200 (ALFA…GGYV), 208–228 (WTFR…MFFM), 282–302 (PIVL…FLLF), 321–341 (GLAY…FSIL), 361–381 (LILM…YGWS), 388–408 (WIVP…VVIP), 425–445 (ALAA…LVAA), and 454–474 (GWGN…PWLF).

This sequence belongs to the major facilitator superfamily.

It is found in the cell membrane. In terms of biological role, MFS-type efflux pump involved in the modulation susceptibility to various compounds including cumyl hydroperoxide, potassium superoxide, many singlet oxygen-generating compounds (eosin Y, rose Bengal, hematoporphyrin, methylene blue, and cercosporin), and the cell wall biosynthesis inhibitor Congo red. Involved in oxidative stress tolerance, colonization, and lesion formation. This is MFS-type transporter MFS19 from Alternaria alternata (Alternaria rot fungus).